We begin with the raw amino-acid sequence, 90 residues long: Lectin-1 (90 aa).

Pyrrolidone carboxylic acid is present on Gln1. A disulfide bond links Cys46 and Cys71.

The N-terminus is blocked. Post-translationally, contains seven disulfide bonds. In terms of processing, proteolytically cleaved. Major form may consist of cleaved, disulfide-bonded subunits.

Functionally, lectin with specificity for complex N-linked glycans and O-linked glycans. Has hemagglutinating activity towards rabbit erythrocytes that is inhibited by N-acetyl-D-galactosamine. This chain is Lectin-1, found in Hypnea cervicornis (Brazilian red alga).